The sequence spans 188 residues: MAAELEGSKCLSGLLSGLAQDTFYGHPGITEELLRSQLYPEVSLEEFRPFLAKMKGILKSIASADMDFNQLEAFLTALTKKQGGITSEQAAVISKFWKSHKTKIRESLMNQSCWDRGLRSLSWRVDGKSQSRHSAQIHTPVAIMELEIGKSGQESEFLCLEFDEVKVNQVLKKLSEVEESISTLMQPA.

A sufficient for interaction with SLC12A2 region spans residues 1-122; sequence MAAELEGSKC…CWDRGLRSLS (122 aa). 3 residues coordinate Cu cation: His-100, Met-109, and His-133. The region spanning 117 to 185 is the COMM domain; the sequence is GLRSLSWRVD…EVEESISTLM (69 aa). The segment at 124–188 is required for binding to PtdIns(4,5)P2; the sequence is RVDGKSQSRH…ESISTLMQPA (65 aa).

The protein belongs to the COMM domain-containing protein 1 family. Component of the commander complex consisting of the CCC subcomplex and the retriever subcomplex. Component of the CCC (COMMD/CCDC22/CCDC93) subcomplex consisting of COMMD1, COMMD2, COMMD3, COMMD4, COMMD5, COMMD6, COMMD7, COMMD8, COMMD9, COMMD10, CCDC22 and CCDC93; within the complex forms a heterodimer with COMMD6. Interacts with VPS35L; the interaction associates the CCC complex with the retriever complex. Identified in a complex with an E3 ubiquitin ligase complex composed of TCEB1/elongin C, CUL2, SOCS1 and RBX1; in the complex interacts directly with SOCS1 and CUL2. Identified in a complex with NF-kappa-B. Interacts directly with SLC12A2. Interacts directly with ATP7B (via the N-terminal region). Interacts with ATP7A. Interacts with FAM107A; this interaction stabilizes COMMD1 in the nucleus. Interacts with CCS, CDKN2A, RELA, REL, RELB, NFKB1/p105, NFKB2/p100, NFKBIB, SCNN1D, SCNN1B, CFTR, CLU, SGK1, AKT1, CUL1, CUL2, CUL3, CUL4A, CUL4B, CUL5, CUL7, HIF1A. Post-translationally, ubiquitinated; undergoes both 'Lys-63'- and 'Lys-48'-linked polyubiquitination. Ubiquitinated by XIAP, leading to its proteasomal degradation.

The protein localises to the nucleus. It is found in the cytoplasm. The protein resides in the endosome membrane. Its subcellular location is the cytoplasmic vesicle. It localises to the early endosome. The protein localises to the recycling endosome. Scaffold protein in the commander complex that is essential for endosomal recycling of transmembrane cargos; the commander complex is composed of the CCC subcomplex and the retriever subcomplex. Can modulate activity of cullin-RING E3 ubiquitin ligase (CRL) complexes by displacing CAND1; in vitro promotes CRL E3 activity and dissociates CAND1 from CUL1 and CUL2. Promotes ubiquitination of NF-kappa-B subunit RELA and its subsequent proteasomal degradation. Down-regulates NF-kappa-B activity. Involved in the regulation of membrane expression and ubiquitination of SLC12A2. Modulates Na(+) transport in epithelial cells by regulation of apical cell surface expression of amiloride-sensitive sodium channel (ENaC) subunits and by promoting their ubiquitination presumably involving NEDD4L. Promotes the localization of SCNN1D to recycling endosomes. Promotes CFTR cell surface expression through regulation of its ubiquitination. Down-regulates SOD1 activity by interfering with its homodimerization. Plays a role in copper ion homeostasis. Involved in copper-dependent ATP7A trafficking between the trans-Golgi network and vesicles in the cell periphery; the function is proposed to depend on its association within the CCC complex and cooperation with the WASH complex on early endosomes. Can bind one copper ion per monomer. May function to facilitate biliary copper excretion within hepatocytes. Binds to phosphatidylinositol 4,5-bisphosphate (PtdIns(4,5)P2). Involved in the regulation of HIF1A-mediated transcription; competes with ARNT/Hif-1-beta for binding to HIF1A resulting in decreased DNA binding and impaired transcriptional activation by HIF-1. Negatively regulates neuroblastoma G1/S phase cell cycle progression and cell proliferation by stimulating ubiquitination of NF-kappa-B subunit RELA and NF-kappa-B degradation in a FAM107A- and actin-dependent manner. In Bos taurus (Bovine), this protein is COMM domain-containing protein 1 (COMMD1).